Consider the following 145-residue polypeptide: MAILLPLKSILPWCCITFSFLLSSSGSISHSTASSSITLTKSSKPTNVPSNSRFDCSTINTFWLIVLSMTSKGKISGRLILRASVYACECTCIRYACCETIYPPRKPFSLSLYFFYFNKKASILFCYPDAKTKPEHPGNKRAGSG.

Residues 1 to 26 form the signal peptide; that stretch reads MAILLPLKSILPWCCITFSFLLSSSG.

This is an uncharacterized protein from Saccharomyces cerevisiae (strain ATCC 204508 / S288c) (Baker's yeast).